Here is a 396-residue protein sequence, read N- to C-terminus: Putative pyridoxal phosphate-dependent acyltransferase (396 aa).

Pyridoxal 5'-phosphate is bound at residue 111–112; sequence GF. Histidine 136 is a substrate binding site. Pyridoxal 5'-phosphate-binding positions include serine 186, 211–214, and 241–244; these read DDAH and TLSK. Lysine 244 is modified (N6-(pyridoxal phosphate)lysine). Threonine 358 is a binding site for substrate.

This sequence belongs to the class-II pyridoxal-phosphate-dependent aminotransferase family. Homodimer. It depends on pyridoxal 5'-phosphate as a cofactor.

The chain is Putative pyridoxal phosphate-dependent acyltransferase from Bacillus cereus (strain ATCC 14579 / DSM 31 / CCUG 7414 / JCM 2152 / NBRC 15305 / NCIMB 9373 / NCTC 2599 / NRRL B-3711).